The chain runs to 204 residues: Urease accessory protein UreG (204 aa).

Residue 11 to 18 (GPVGAGKT) participates in GTP binding.

Belongs to the SIMIBI class G3E GTPase family. UreG subfamily. Homodimer. UreD, UreF and UreG form a complex that acts as a GTP-hydrolysis-dependent molecular chaperone, activating the urease apoprotein by helping to assemble the nickel containing metallocenter of UreC. The UreE protein probably delivers the nickel.

The protein localises to the cytoplasm. Facilitates the functional incorporation of the urease nickel metallocenter. This process requires GTP hydrolysis, probably effectuated by UreG. The chain is Urease accessory protein UreG from Staphylococcus aureus (strain Mu3 / ATCC 700698).